The chain runs to 525 residues: uncharacterized protein (525 aa).

Transmembrane regions (helical) follow at residues 36 to 56 (AVAAVSLTALPIVPLALTLAL) and 61 to 81 (ALPAGAALWASASLLAAAAAI). A PAC domain is found at 173-228 (SAVDIRLERTSADGPQFAHIYCEMTPLRDAEGNLLAIVAQSRDVSEEARLQAEAAA). In terms of domain architecture, Histidine kinase spans 246 to 466 (AVSHELRTPL…VIVVTIPSDA (221 aa)). His249 bears the Phosphohistidine; by autocatalysis mark. Residues 506-525 (LHTGEIGREGGHGAAQAKTA) form a disordered region.

Its subcellular location is the cell membrane. It carries out the reaction ATP + protein L-histidine = ADP + protein N-phospho-L-histidine.. This is an uncharacterized protein from Rhizobium meliloti (strain 1021) (Ensifer meliloti).